Consider the following 252-residue polypeptide: D-aminoacyl-tRNA deacylase (252 aa).

This sequence belongs to the DtdA deacylase family. In terms of assembly, monomer. Zn(2+) serves as cofactor.

The enzyme catalyses a D-aminoacyl-tRNA + H2O = a tRNA + a D-alpha-amino acid + H(+). The catalysed reaction is glycyl-tRNA(Ala) + H2O = tRNA(Ala) + glycine + H(+). In terms of biological role, D-aminoacyl-tRNA deacylase with broad substrate specificity. By recycling D-aminoacyl-tRNA to D-amino acids and free tRNA molecules, this enzyme counteracts the toxicity associated with the formation of D-aminoacyl-tRNA entities in vivo. In Pyrobaculum arsenaticum (strain DSM 13514 / JCM 11321 / PZ6), this protein is D-aminoacyl-tRNA deacylase.